The primary structure comprises 225 residues: Germin-like protein 8-3 (225 aa).

The first 23 residues, 1–23 (MASSSLFLLASLLVLASWQQAIA), serve as a signal peptide directing secretion. Cysteines 33 and 48 form a disulfide. Residues Asn53 and Asn78 are each glycosylated (N-linked (GlcNAc...) asparagine). The 154-residue stretch at 60 to 213 (FNAAKFDMPR…AFQVEKKVID (154 aa)) folds into the Cupin type-1 domain. The Mn(2+) site is built by His111, His113, Glu118, and His158.

It belongs to the germin family. Oligomer (believed to be a pentamer but probably hexamer).

The protein resides in the secreted. The protein localises to the extracellular space. It localises to the apoplast. In terms of biological role, plays a role in broad-spectrum disease resistance. Probably has no oxalate oxidase activity even if the active site is conserved. The protein is Germin-like protein 8-3 (GER2) of Oryza sativa subsp. japonica (Rice).